A 129-amino-acid polypeptide reads, in one-letter code: MTRFLILSAVLAGPALAGDTSPAQLIAGYEAAAGAPADAERGRALFLSTQTGGKPDTPSCTTCHGADVTRAGQTRTGKEIAPLAPSATPDRFTDSARVEKWLGRNCNSVIGRDCTPGEKADLLAWLAAQ.

An N-terminal signal peptide occupies residues 1-17 (MTRFLILSAVLAGPALA). 3 residues coordinate heme c: Cys60, Cys63, and His64. A disulfide bridge links Cys106 with Cys114.

Post-translationally, binds 1 heme c group covalently per subunit.

Functionally, high-spin cytochrome. Transiently bind oxygen during autoxidation, which occurs with a half-life of 3 minutes with a 4-fold excess of O(2). Also binds carbon monoxide, azide and cyanide. The protein is Cytochrome c-type protein SHP (shp) of Cereibacter sphaeroides (strain ATCC 17023 / DSM 158 / JCM 6121 / CCUG 31486 / LMG 2827 / NBRC 12203 / NCIMB 8253 / ATH 2.4.1.) (Rhodobacter sphaeroides).